A 205-amino-acid polypeptide reads, in one-letter code: Large ribosomal subunit protein uL3c (205 aa).

The disordered stretch occupies residues 129 to 154 (SRGPMSHGSKNHRQPGSIGAGTTPGR).

This sequence belongs to the universal ribosomal protein uL3 family. Part of the 50S ribosomal subunit.

The protein resides in the plastid. Its subcellular location is the chloroplast. Functionally, one of the primary rRNA binding proteins, it binds directly near the 3'-end of the 23S rRNA, where it nucleates assembly of the 50S subunit. The protein is Large ribosomal subunit protein uL3c (rpl3) of Pyropia yezoensis (Susabi-nori).